The chain runs to 1099 residues: Mediator of RNA polymerase II transcription subunit 5 (1099 aa).

Positions 41–66 (DNDDAKTQEGSGSQDKTDVEESISKP) are disordered.

The protein belongs to the Mediator complex subunit 5 family. Component of the Mediator complex.

Its subcellular location is the nucleus. In terms of biological role, component of the Mediator complex, a coactivator involved in the regulated transcription of nearly all RNA polymerase II-dependent genes. Mediator functions as a bridge to convey information from gene-specific regulatory proteins to the basal RNA polymerase II transcription machinery. Mediator is recruited to promoters by direct interactions with regulatory proteins and serves as a scaffold for the assembly of a functional preinitiation complex with RNA polymerase II and the general transcription factors. This chain is Mediator of RNA polymerase II transcription subunit 5 (NUT1), found in Candida glabrata (strain ATCC 2001 / BCRC 20586 / JCM 3761 / NBRC 0622 / NRRL Y-65 / CBS 138) (Yeast).